Reading from the N-terminus, the 21-residue chain is ALCNCNRIIIPHMCWKKCGKK.

2 cysteine pairs are disulfide-bonded: Cys-3/Cys-14 and Cys-5/Cys-18.

In terms of processing, oxidation of Met-13 results in the loss of biological activity. An amidation at Lys-21 is suggested in Ref.1. As to expression, expressed by the venom gland.

It localises to the secreted. Functionally, presynaptic neurotoxin that blocks the inwardly rectifying Kir1.1/KCNJ1 and Kir3.1/3.4 (KCNJ3/KCNJ5) potassium channels with high affinity by binding to the M1-M2 linker region of these channels in a 1:1 stoichiometry. It may block the potassium channel pore by occluding its alpha helix into the channel vestibule. Tertiapin-Q also inhibits calcium-activated large conductance BK-type (KCNMA) potassium channels in a concentration-, and voltage-dependent manner, in addition to inhibiting Kir3.1/3.2 (KCNJ3/KCNJ6) heteromultimers potassium channels. It can prevent dose-dependently acetylcholine(ACh)-induced atrioventricular blocks in mammalian hearts, as KCNJ3/KCNJ5 channels (also named I(KACh), because these channels are activated by ACh) are found in mammalian myocytes. Interacts specifically with calmodulin in the presence of calcium. This is Tertiapin from Apis mellifera (Honeybee).